Reading from the N-terminus, the 1453-residue chain is MGAQDRPQCHFDIEINREPVGRIMFQLFSDICPKTCKNFLCLCSGEKGLGKTTGKKLCYKGSTFHRVVKNFMIQGGDFSEGNGKGGESIYGGYFKDENFILKHDRAFLLSMANRGKHTNGSQFFITTKPAPHLDGVHVVFGLVISGFEVIEQIENLKTDAASRPYADVRVIDCGVLATKLTKDVFEKKRKKPTCSEGSDSSSRSSSSSESSSESEVERETIRRRRHKRRPKVRHAKKRRKEMSSSEEPRRKRTVSPEGYSERSDVNEKRSVDSNTKREKPVVRPEEIPPVPENRFLLRRDMPAITVEPEQNIPDVAPVVSDQKPSVSKSGRKIKGRGTIRYHTPPRSRSHSESKDDDSSETPPHWKEEMQRLRAYRPPSGEKWSKGDKLSDPCSSRWDERSLSQRSRSWSYNGYYSDLSTARHSDGHHKKHRKEKKFKHKKKAKKQKHCRRHRQTKKRRIVMPDLEPSRSPTHRMKSSCVRERRSRASSSSSHHSSKRDWSKSDQDDGSASTHSSRDSYRSKSHSRSDSRGSSRSRAVSKSSSRSLNRSKSRSSSRSGPRRTSISPKKPAQLSENKPVKTEPLRPSVPQNGNVLVQPVAAENIPVIPLSDSPPPSRWKPGQKPWKPSYERIQEMKAKTTHLLPVQSTYSLTNIKATVSSSSYHKREKPSESDGSAYSKYSDRSSGSSGRSGSKSSRSRSSSRSYTRSRSRSLPTSRSLSRSPSSRSHSPNKYSDGSQHSRSSSYTSVSSDDGRRAMFRSNRKKSVTSHKRHRSNSEKTLHSKYVRGREKSSRHRKYSESRSSLDYSSDSDQSHVQVYSAPEKEKQGKVEALNDKQGKGREEGKPKPEWECPRSKKRTPKDHSRDDSVSKGKNCAGSKWDSESNSEQDVTKSRKSDPRRGSEKEEGEASSDSESEVGQSHIKAKPPAKPPTSTFLPGSDGAWKSRRPQSSASESESSCSNLGNIRGEPQKQKHSKDDLKGDHTKRAREKSKAKKDKKHKAPKRKQAFHWQPPLEFGDDEEEEMNGKQVTQDPKEKRHVSEKCEAVKDGIPNVEKTCDEGSSPSKPKKGTLEQDPLAEGGHDPSSCPAPLKVEDNTASSPPSAQHLEEHGPGGGEDVLQTDDNMEICTPDRTSPAKGEVVSPLANHRLDSPEVNIIPEQDECMAHPRAGGEQESSMSESKTLGESGVKQDSSTSVTSPVETSGKKEGAEKSQMNLTDKWKPLQGVGNLSVSTATTSSALDVKALSTVPEVKPQGLRIEIKSKNKVRPGSLFDEVRKTARLNRRPRNQESSSDDQTPSRDGDSQSRSPHRSRSKSETKSRHRTRSVSYSHSRSRSRSSTSSYRSRSYSRSRSRDWYSRGRTRSRSSSYGSFHSHRTSSRSRSRSSSYDLHSRSRSYTYDSYYSRSRSRSRSQRSDSYHRGRSYNRRSRSGRSYGSDSESDRSYSHHRSPSESSRYS.

A PPIase cyclophilin-type domain is found at 10 to 175 (HFDIEINREP…ADVRVIDCGV (166 aa)). The interval 187–625 (KKRKKPTCSE…RWKPGQKPWK (439 aa)) is disordered. A compositionally biased stretch (low complexity) spans 195-213 (SEGSDSSSRSSSSSESSSE). A compositionally biased stretch (basic residues) spans 221 to 240 (IRRRRHKRRPKVRHAKKRRK). A compositionally biased stretch (basic and acidic residues) spans 259 to 286 (YSERSDVNEKRSVDSNTKREKPVVRPEE). Lys-323 is covalently cross-linked (Glycyl lysine isopeptide (Lys-Gly) (interchain with G-Cter in SUMO2)). A compositionally biased stretch (basic residues) spans 329–348 (SGRKIKGRGTIRYHTPPRSR). A phosphoserine mark is found at Ser-379, Ser-401, and Ser-416. The span at 382 to 402 (KWSKGDKLSDPCSSRWDERSL) shows a compositional bias: basic and acidic residues. The span at 403–421 (SQRSRSWSYNGYYSDLSTA) shows a compositional bias: polar residues. Residues 425 to 460 (DGHHKKHRKEKKFKHKKKAKKQKHCRRHRQTKKRRI) are compositionally biased toward basic residues. Basic and acidic residues predominate over residues 514–531 (SSRDSYRSKSHSRSDSRG). Composition is skewed to low complexity over residues 532–546 (SSRS…SRSL) and 554–565 (SSRSGPRRTSIS). Residues Lys-576 and Lys-579 each participate in a glycyl lysine isopeptide (Lys-Gly) (interchain with G-Cter in SUMO2) cross-link. At Ser-611 the chain carries Phosphoserine. A Glycyl lysine isopeptide (Lys-Gly) (interchain with G-Cter in SUMO2) cross-link involves residue Lys-637. At Ser-646 the chain carries Phosphoserine. The span at 651 to 661 (TNIKATVSSSS) shows a compositional bias: polar residues. Positions 651-1453 (TNIKATVSSS…RSPSESSRYS (803 aa)) are disordered. Residues Lys-654 and Lys-664 each participate in a glycyl lysine isopeptide (Lys-Gly) (interchain with G-Cter in SUMO2) cross-link. Low complexity-rich tracts occupy residues 682–726 (RSSG…SSRS) and 736–749 (SQHS…SVSS). Residues 755-772 (AMFRSNRKKSVTSHKRHR) show a composition bias toward basic residues. Basic and acidic residues predominate over residues 773–789 (SNSEKTLHSKYVRGREK). The segment covering 799–809 (SRSSLDYSSDS) has biased composition (low complexity). Basic and acidic residues-rich tracts occupy residues 820–852 (PEKE…ECPR) and 859–868 (KDHSRDDSVS). A phosphoserine mark is found at Ser-880, Ser-882, Ser-884, and Ser-900. Residues 887-902 (DVTKSRKSDPRRGSEK) show a composition bias toward basic and acidic residues. Over residues 903–913 (EEGEASSDSES) the composition is skewed to acidic residues. The segment covering 948-958 (SSASESESSCS) has biased composition (low complexity). Positions 966–982 (EPQKQKHSKDDLKGDHT) are enriched in basic and acidic residues. Over residues 983–1005 (KRAREKSKAKKDKKHKAPKRKQA) the composition is skewed to basic residues. Residues 1030–1045 (DPKEKRHVSEKCEAVK) are compositionally biased toward basic and acidic residues. A phosphoserine mark is found at Ser-1139 and Ser-1148. The span at 1170 to 1180 (QESSMSESKTL) shows a compositional bias: polar residues. A compositionally biased stretch (low complexity) spans 1189-1199 (SSTSVTSPVET). Residue Ser-1195 is modified to Phosphoserine. Residues Lys-1208 and Lys-1249 each participate in a glycyl lysine isopeptide (Lys-Gly) (interchain with G-Cter in SUMO2) cross-link. The interval 1303-1453 (RSPHRSRSKS…RSPSESSRYS (151 aa)) is arg/Ser tandem repeat-rich. The segment covering 1322–1346 (SVSYSHSRSRSRSSTSSYRSRSYSR) has biased composition (low complexity). The span at 1369-1379 (HSHRTSSRSRS) shows a compositional bias: basic residues. The segment covering 1380 to 1401 (RSSSYDLHSRSRSYTYDSYYSR) has biased composition (low complexity). Basic residues predominate over residues 1416 to 1426 (RGRSYNRRSRS).

It is found in the cell membrane. The catalysed reaction is [protein]-peptidylproline (omega=180) = [protein]-peptidylproline (omega=0). Inhibited by cyclosporin A (CsA). PPIase that catalyzes the cis-trans isomerization of proline imidic peptide bonds in oligopeptides and may therefore assist protein folding. Component of a putative tumor-recognition complex involved in the function of NK cells. This Mus musculus (Mouse) protein is NK-tumor recognition protein.